A 1388-amino-acid chain; its full sequence is DNA-directed RNA polymerase subunit beta' (1388 aa).

Zn(2+) is bound by residues C70, C72, C85, and C88. Residues D461, D463, and D465 each contribute to the Mg(2+) site. Zn(2+)-binding residues include C808, C882, C889, and C892.

Belongs to the RNA polymerase beta' chain family. In terms of assembly, the RNAP catalytic core consists of 2 alpha, 1 beta, 1 beta' and 1 omega subunit. When a sigma factor is associated with the core the holoenzyme is formed, which can initiate transcription. It depends on Mg(2+) as a cofactor. Zn(2+) is required as a cofactor.

It carries out the reaction RNA(n) + a ribonucleoside 5'-triphosphate = RNA(n+1) + diphosphate. DNA-dependent RNA polymerase catalyzes the transcription of DNA into RNA using the four ribonucleoside triphosphates as substrates. The protein is DNA-directed RNA polymerase subunit beta' of Acidiphilium cryptum (strain JF-5).